A 246-amino-acid polypeptide reads, in one-letter code: 2-deoxyglucose-6-phosphate phosphatase 1 (246 aa).

D83 acts as the Nucleophile in catalysis. Position 83 (D83) interacts with Mg(2+). Residues D83, E92, and 146 to 149 (DVKN) contribute to the substrate site. D183 lines the Mg(2+) pocket.

It belongs to the HAD-like hydrolase superfamily. DOG/GPP family. Mg(2+) is required as a cofactor.

It catalyses the reaction 2-deoxy-D-glucose 6-phosphate + H2O = 2-deoxy-D-glucose + phosphate. In terms of biological role, phosphatase that is active on 2-deoxy-D-glucose 6-phosphate (2-DOG-6P), as well as on fructose-1-P. This chain is 2-deoxyglucose-6-phosphate phosphatase 1, found in Saccharomyces cerevisiae (strain ATCC 204508 / S288c) (Baker's yeast).